Here is a 139-residue protein sequence, read N- to C-terminus: Holo-[acyl-carrier-protein] synthase (139 aa).

The Mg(2+) site is built by D8 and E57.

The protein belongs to the P-Pant transferase superfamily. AcpS family. Requires Mg(2+) as cofactor.

It is found in the cytoplasm. The catalysed reaction is apo-[ACP] + CoA = holo-[ACP] + adenosine 3',5'-bisphosphate + H(+). Its function is as follows. Transfers the 4'-phosphopantetheine moiety from coenzyme A to a Ser of acyl-carrier-protein. This is Holo-[acyl-carrier-protein] synthase from Sinorhizobium fredii (strain NBRC 101917 / NGR234).